The sequence spans 248 residues: Small ribosomal subunit protein uS2 (248 aa).

This sequence belongs to the universal ribosomal protein uS2 family.

In Dechloromonas aromatica (strain RCB), this protein is Small ribosomal subunit protein uS2.